The chain runs to 59 residues: Large ribosomal subunit protein uL30 (59 aa).

This sequence belongs to the universal ribosomal protein uL30 family. Part of the 50S ribosomal subunit.

The polypeptide is Large ribosomal subunit protein uL30 (Hydrogenobaculum sp. (strain Y04AAS1)).